The sequence spans 258 residues: MASTAMHSEPSAAAVPRHLAIIMDGNGRWAQRRRRPRVIGHRAGARAVNRTIDFCLDKGVSALTLFAFSSENWGRPQDEVDALMKLFLHALDRGVEELQRRGVQVRFIGDRSRFTAPLRDRMAGAERITAANTRLVLSIAASYGGRQDIAMAARALAVEVAAGRLQPEQIDEALLASRVALADLPAPDLFIRTGGDTRISNFLLWQLAYTELWFTETLWPEFDAGVLQQALDDYAGRERRFGLTSAQIAEKATEASSA.

Asp-24 is a catalytic residue. Mg(2+) is bound at residue Asp-24. Substrate is bound by residues 25-28 (GNGR), Trp-29, Arg-37, His-41, and 69-71 (SSE). The active-site Proton acceptor is the Asn-72. Substrate-binding positions include Trp-73, Arg-75, Arg-192, and 198-200 (RIS). Glu-211 contacts Mg(2+).

Belongs to the UPP synthase family. As to quaternary structure, homodimer. Mg(2+) is required as a cofactor.

It carries out the reaction 8 isopentenyl diphosphate + (2E,6E)-farnesyl diphosphate = di-trans,octa-cis-undecaprenyl diphosphate + 8 diphosphate. Catalyzes the sequential condensation of isopentenyl diphosphate (IPP) with (2E,6E)-farnesyl diphosphate (E,E-FPP) to yield (2Z,6Z,10Z,14Z,18Z,22Z,26Z,30Z,34E,38E)-undecaprenyl diphosphate (di-trans,octa-cis-UPP). UPP is the precursor of glycosyl carrier lipid in the biosynthesis of bacterial cell wall polysaccharide components such as peptidoglycan and lipopolysaccharide. The chain is Ditrans,polycis-undecaprenyl-diphosphate synthase ((2E,6E)-farnesyl-diphosphate specific) from Xanthomonas campestris pv. campestris (strain ATCC 33913 / DSM 3586 / NCPPB 528 / LMG 568 / P 25).